The sequence spans 151 residues: Cytochrome c-type biogenesis protein CcmE (151 aa).

Topologically, residues 1–8 (MNPLRRKR) are cytoplasmic. Residues 9 to 29 (LLIILAILVGVGIAVGLALSA) form a helical; Signal-anchor for type II membrane protein membrane-spanning segment. Over 30–151 (LQQNINLFYT…QSAPTPAKEG (122 aa)) the chain is Periplasmic. Residues His-124 and Tyr-128 each coordinate heme.

It belongs to the CcmE/CycJ family.

Its subcellular location is the cell inner membrane. Heme chaperone required for the biogenesis of c-type cytochromes. Transiently binds heme delivered by CcmC and transfers the heme to apo-cytochromes in a process facilitated by CcmF and CcmH. This chain is Cytochrome c-type biogenesis protein CcmE, found in Pseudomonas fluorescens (strain SBW25).